The chain runs to 741 residues: NAD(P)H-quinone oxidoreductase subunit 5, chloroplastic (741 aa).

Transmembrane regions (helical) follow at residues 9-29, 40-60, 89-109, 125-145, 147-167, 185-205, 219-239, 258-278, 284-304, 327-347, 354-374, 396-416, 425-445, 549-569, 605-625, and 721-741; these read WIIP…LLLF, WAFQ…NLSI, IDPL…MVLI, FAYM…SNLI, IYIF…FWFT, GDFG…SFEF, NEVN…GAIA, TPIS…FPVA, FIVI…TVFF, LGYM…FHLI, ALLF…VGYC, NSFL…CFWS, WLYS…TAFY, LFPI…GIPF, VFSV…YKPV, and YLFF…FLNL.

This sequence belongs to the complex I subunit 5 family. NDH is composed of at least 16 different subunits, 5 of which are encoded in the nucleus.

It is found in the plastid. The protein localises to the chloroplast thylakoid membrane. The enzyme catalyses a plastoquinone + NADH + (n+1) H(+)(in) = a plastoquinol + NAD(+) + n H(+)(out). It catalyses the reaction a plastoquinone + NADPH + (n+1) H(+)(in) = a plastoquinol + NADP(+) + n H(+)(out). Functionally, NDH shuttles electrons from NAD(P)H:plastoquinone, via FMN and iron-sulfur (Fe-S) centers, to quinones in the photosynthetic chain and possibly in a chloroplast respiratory chain. The immediate electron acceptor for the enzyme in this species is believed to be plastoquinone. Couples the redox reaction to proton translocation, and thus conserves the redox energy in a proton gradient. The polypeptide is NAD(P)H-quinone oxidoreductase subunit 5, chloroplastic (ndhF) (Guizotia abyssinica (Niger)).